The following is a 183-amino-acid chain: Proton-transporting V-type ATPase complex assembly regulator TMEM9 (183 aa).

Positions 1–20 (MKLLSLVAVVGCLLVPPAEA) are cleaved as a signal peptide. N-linked (GlcNAc...) asparagine glycosylation is found at N21, N38, and N47. Over 21–89 (NKSSEDIRCK…YEERSTTTIK (69 aa)) the chain is Extracellular. A helical membrane pass occupies residues 90–110 (VIIVIYLSVVGALLLYMAFLM). At 111 to 183 (LVDPLIRKPD…TVFDRHKMLS (73 aa)) the chain is on the cytoplasmic side. S137 and S144 each carry phosphoserine.

Belongs to the TMEM9 family. In terms of assembly, interacts with the v-ATPase accessory protein ATP6AP2 and with the v-ATPase complex subunit ATP6V0D1; these interactions lead to the assembly of the v-ATPase complex. In terms of processing, N-glycosylated. Highly expressed in adrenal gland, thyroid gland, testis, ovary and prostate. Moderate expression in trachea, spinal cord, stomach, colon, small intestine and spleen. Low expression in bone marrow, lymph node, thymus and peripheral blood lymphocytes. Expression is detected in hematopoietic cell lines including those of myeloid, erythroid, B- and T-cell origin.

It is found in the lysosome membrane. The protein localises to the late endosome membrane. The protein resides in the endosome. Its subcellular location is the multivesicular body membrane. Its function is as follows. Transmembrane protein that binds to and facilitates the assembly of lysosomal proton-transporting V-type ATPase (v-ATPase), resulting in enhanced lysosomal acidification and trafficking. By bringing the v-ATPase accessory protein ATP6AP2 and the v-ATPase subunit ATP6V0D1 together, allows v-ATPase complex formation and activation. TMEM9-controlled vesicular acidification induces hyperactivation of Wnt/beta-catenin signaling, involved in development, tissue homeostasis and tissue regeneration, through lysosomal degradation of adenomatous polyposis coli/APC. In the liver, involved in hepatic regeneration. This Homo sapiens (Human) protein is Proton-transporting V-type ATPase complex assembly regulator TMEM9.